The chain runs to 396 residues: Putative transposase y4rJ (396 aa).

Belongs to the transposase 20 family.

The protein is Putative transposase y4rJ of Sinorhizobium fredii (strain NBRC 101917 / NGR234).